We begin with the raw amino-acid sequence, 160 residues long: Ribosomal RNA large subunit methyltransferase H (160 aa).

S-adenosyl-L-methionine contacts are provided by residues G108 and 127-132 (FGLMTW).

This sequence belongs to the RNA methyltransferase RlmH family. Homodimer.

It is found in the cytoplasm. It catalyses the reaction pseudouridine(1915) in 23S rRNA + S-adenosyl-L-methionine = N(3)-methylpseudouridine(1915) in 23S rRNA + S-adenosyl-L-homocysteine + H(+). In terms of biological role, specifically methylates the pseudouridine at position 1915 (m3Psi1915) in 23S rRNA. The sequence is that of Ribosomal RNA large subunit methyltransferase H from Bartonella bacilliformis (strain ATCC 35685 / KC583 / Herrer 020/F12,63).